The primary structure comprises 60 residues: Cytotoxin 2 (60 aa).

Intrachain disulfides connect C3/C21, C14/C38, C42/C53, and C54/C59.

Belongs to the three-finger toxin family. Short-chain subfamily. Type IA cytotoxin sub-subfamily. As to quaternary structure, monomer, or heterodimer with alpha-cobratoxin (AC P01391); disulfide-linked. Expressed by the venom gland.

The protein resides in the secreted. It is found in the target cell membrane. Functionally, monomer: shows cytolytic activity. In terms of biological role, heterodimer: has no cytolytic activity, but retains most of the alpha-cobratoxin capacity to compete with alpha-bungarotoxin for binding to Torpedo and alpha-7/CHRNA7 nicotinic acetylcholine receptors (nAChRs) as well as to Lymnea stagnalis acetylcholine-binding protein. In Naja kaouthia (Monocled cobra), this protein is Cytotoxin 2.